We begin with the raw amino-acid sequence, 62 residues long: Large ribosomal subunit protein uL30 (62 aa).

The protein belongs to the universal ribosomal protein uL30 family. Part of the 50S ribosomal subunit.

This Polynucleobacter asymbioticus (strain DSM 18221 / CIP 109841 / QLW-P1DMWA-1) (Polynucleobacter necessarius subsp. asymbioticus) protein is Large ribosomal subunit protein uL30.